The sequence spans 273 residues: Putative pyruvate, phosphate dikinase regulatory protein (273 aa).

Residue 149–156 coordinates ADP; that stretch reads GPSRTSKT.

The protein belongs to the pyruvate, phosphate/water dikinase regulatory protein family. PDRP subfamily.

It catalyses the reaction N(tele)-phospho-L-histidyl/L-threonyl-[pyruvate, phosphate dikinase] + ADP = N(tele)-phospho-L-histidyl/O-phospho-L-threonyl-[pyruvate, phosphate dikinase] + AMP + H(+). The catalysed reaction is N(tele)-phospho-L-histidyl/O-phospho-L-threonyl-[pyruvate, phosphate dikinase] + phosphate + H(+) = N(tele)-phospho-L-histidyl/L-threonyl-[pyruvate, phosphate dikinase] + diphosphate. Functionally, bifunctional serine/threonine kinase and phosphorylase involved in the regulation of the pyruvate, phosphate dikinase (PPDK) by catalyzing its phosphorylation/dephosphorylation. This chain is Putative pyruvate, phosphate dikinase regulatory protein, found in Rickettsia conorii (strain ATCC VR-613 / Malish 7).